Consider the following 76-residue polypeptide: uncharacterized protein (76 aa).

The next 3 membrane-spanning stretches (helical) occupy residues 1-21, 35-55, and 56-76; these read MTAI…HLQL, CFDI…LLII, and NNKF…NTMI.

Its subcellular location is the cell membrane. This is an uncharacterized protein from Borreliella burgdorferi (strain ATCC 35210 / DSM 4680 / CIP 102532 / B31) (Borrelia burgdorferi).